Here is a 273-residue protein sequence, read N- to C-terminus: Cytosolic sulfotransferase 4 (273 aa).

74–79 (KCGTTW) contributes to the 3'-phosphoadenylyl sulfate binding site. Histidine 121 (proton acceptor) is an active-site residue. 3'-phosphoadenylyl sulfate is bound by residues arginine 143 and 239–241 (RKG).

This sequence belongs to the sulfotransferase 1 family.

The protein resides in the cytoplasm. Functionally, sulfotransferase that utilizes 3'-phospho-5'-adenylyl sulfate (PAPS) as sulfonate donor. This is Cytosolic sulfotransferase 4 (SOT4) from Arabidopsis thaliana (Mouse-ear cress).